A 158-amino-acid chain; its full sequence is Photosystem I assembly protein Ycf3 (158 aa).

3 TPR repeats span residues 35–68 (AFSYYREGMAAQAEGEYAQALESYYHALEFEEDV), 72–105 (SYIIYNIGLIYASNGEDEQALEYYHQALELNPRL), and 113–146 (AVIYHKQGMTYQDEQLLQKAAAYWRKAIQLAPGQ).

Belongs to the Ycf3 family.

It localises to the plastid. It is found in the chloroplast thylakoid membrane. In terms of biological role, essential for the assembly of the photosystem I (PSI) complex. May act as a chaperone-like factor to guide the assembly of the PSI subunits. The protein is Photosystem I assembly protein Ycf3 of Cyanidioschyzon merolae (strain NIES-3377 / 10D) (Unicellular red alga).